Here is a 347-residue protein sequence, read N- to C-terminus: Melanoma-associated antigen B1 (347 aa).

Basic residues predominate over residues 1–17 (MPRGQKSKLRAREKRRK). The interval 1-104 (MPRGQKSKLR…QATTSTESSV (104 aa)) is disordered. Polar residues-rich tracts occupy residues 39 to 53 (PSSS…TSSP) and 89 to 102 (ENAS…STES). One can recognise an MAGE domain in the interval 108-307 (VAWEAGMLMH…RDFPSHYEEA (200 aa)). Residues 315 to 347 (AQVRSSVRARRRTTATTFRARSRAPFSRSSHPM) form a disordered region. A compositionally biased stretch (low complexity) spans 328-347 (TATTFRARSRAPFSRSSHPM).

As to expression, expressed only in testis.

In Homo sapiens (Human), this protein is Melanoma-associated antigen B1 (MAGEB1).